The chain runs to 610 residues: Chaperone protein DnaK (610 aa).

T173 bears the Phosphothreonine; by autocatalysis mark. Disordered stretches follow at residues 525–544 (ENIGEEDKKSAEEKKDALKT) and 576–610 (AAQQQQQAQGANAGQNNDSTVEDAEFKEVKDDDKK). Basic and acidic residues predominate over residues 529-542 (EEDKKSAEEKKDAL). Positions 576–592 (AAQQQQQAQGANAGQNN) are enriched in low complexity. Over residues 599 to 610 (AEFKEVKDDDKK) the composition is skewed to basic and acidic residues.

Belongs to the heat shock protein 70 family.

Acts as a chaperone. The chain is Chaperone protein DnaK from Staphylococcus aureus (strain Mu3 / ATCC 700698).